The primary structure comprises 261 residues: MRLALGIEYDGAGFCGWQSQPNRLAVQDALESALSQLAGHQVRVSAAGRTDTGVHALSQVVHFDTEAVRSQTAWVRGVNTKLPRGVRVLWAKEVDPRFHARFDAYQRSYQYWLINQPVAPAVMAGKAGWFHQPLDLQAMQEAMAYLLGQHDFSAFRAAECQAKSPVKTMHHASVSAFGSSMIFDFCASAFLHHQVRNMVGALVYIGKGKYPPVFIAELLEKRDRRCSPPTFSPDGLYLTGVGYDGCWGLPGTERKLQIGIA.

The active-site Nucleophile is the aspartate 51. Position 109 (tyrosine 109) interacts with substrate.

The protein belongs to the tRNA pseudouridine synthase TruA family. As to quaternary structure, homodimer.

The catalysed reaction is uridine(38/39/40) in tRNA = pseudouridine(38/39/40) in tRNA. Its function is as follows. Formation of pseudouridine at positions 38, 39 and 40 in the anticodon stem and loop of transfer RNAs. This is tRNA pseudouridine synthase A from Methylobacillus flagellatus (strain ATCC 51484 / DSM 6875 / VKM B-1610 / KT).